The primary structure comprises 150 residues: Large ribosomal subunit protein bL9 (150 aa).

Belongs to the bacterial ribosomal protein bL9 family.

Binds to the 23S rRNA. The sequence is that of Large ribosomal subunit protein bL9 from Vibrio campbellii (strain ATCC BAA-1116).